The sequence spans 245 residues: Orotidine 5'-phosphate decarboxylase (245 aa).

Substrate is bound by residues Asp22, Lys44, 71 to 80, Thr131, Arg192, Gln201, Gly221, and Arg222; that span reads DLKFHDIPNT. The active-site Proton donor is the Lys73.

This sequence belongs to the OMP decarboxylase family. Type 1 subfamily. Homodimer.

The enzyme catalyses orotidine 5'-phosphate + H(+) = UMP + CO2. It participates in pyrimidine metabolism; UMP biosynthesis via de novo pathway; UMP from orotate: step 2/2. Catalyzes the decarboxylation of orotidine 5'-monophosphate (OMP) to uridine 5'-monophosphate (UMP). The sequence is that of Orotidine 5'-phosphate decarboxylase from Shigella flexneri.